A 159-amino-acid chain; its full sequence is Small ribosomal subunit protein uS17 (159 aa).

Belongs to the universal ribosomal protein uS17 family.

The chain is Small ribosomal subunit protein uS17 (RPS11) from Euphorbia esula (Leafy spurge).